Consider the following 301-residue polypeptide: Probable alpha-L-glutamate ligase (301 aa).

The 184-residue stretch at Leu-104 to Glu-287 folds into the ATP-grasp domain. ATP-binding positions include Lys-141, Glu-178–Tyr-179, Asp-187, and Arg-211–Asn-213. Mg(2+) contacts are provided by Asp-248, Glu-260, and Asn-262. 3 residues coordinate Mn(2+): Asp-248, Glu-260, and Asn-262.

Belongs to the RimK family. Requires Mg(2+) as cofactor. Mn(2+) serves as cofactor.

The polypeptide is Probable alpha-L-glutamate ligase (Pseudomonas putida (strain GB-1)).